The chain runs to 1071 residues: Myosin IF heavy chain (1071 aa).

A Myosin motor domain is found at 40–736; sequence VGLTDMCFLE…TLFHFEELRQ (697 aa). 134–141 is an ATP binding site; that stretch reads GESGSGKT. The tract at residues 610–632 is actin-binding; the sequence is INDLIGKLNTCQPHYIRCIKSNE. In terms of domain architecture, IQ spans 739–768; the sequence is LPSIVITIQRVWRGYKVRKWYKQELQRLRE. Positions 870 to 1069 constitute a TH1 domain; that stretch reads SRKKEWDCRR…KGNTAIVYYN (200 aa).

The protein belongs to the TRAFAC class myosin-kinesin ATPase superfamily. Myosin family. Myosin I heavy chain is single-headed. Dimer of a heavy and a light chain. Inability to self-assemble into filaments.

Its function is as follows. Myosin is a protein that binds to actin and has ATPase activity that is activated by actin. This chain is Myosin IF heavy chain (myoF), found in Dictyostelium discoideum (Social amoeba).